Here is a 619-residue protein sequence, read N- to C-terminus: MADEKRPASRAWLGYLLIAVGILVLSGIVRSRGRPLVPYDEAVAEVRRGEISAAIVKPDEIELVRRESPQRPEERVRVTRLPGVEDEPLVRALLDKQVRIEAKSPQTSVWMQVAIWMLPLVLINAAFFMMLRRAGQGAGGPLGFLRSKAKIYDRSRQDPVRFSDVAGVDEAKDELVEVVDFLKEPSRYRSLGGRIPRGLLLIGPPGTGKTLLARAVAGEANVPFFSLNASEFVEMFVGLGAARVRELFEEARKSAPSIVFIDEIDAVGRTRGGLGALATHDEREQTLHQLLAELDGFDARTTVILMAATNRPEVLDPALLRPGRFDRQVIVDRPDLRGREAILAVHARRVPLASGVDLGLVARRTPGMVGADLAKIVNEAALAGARRGAREIGQADFDEALDRSQLGLRRRGQIMTAEERRRVAYHEAGHALVALALPAADPVERVSIVARTIGALGVTIQVPRDERQLVTEQEIESRVTVMLGGRAAEELALGQVSSGAHDDLGRATALVREMVTRLGMSRRLGLAALARTVGAPMLGVLQEERTCSEATAREVDEEVRERLGEMYLKAKQLLVDRREGLEAVAEALVLKETLRGEELEEIAAVSTRRKIAVGPPSAA.

Over 1–8 the chain is Cytoplasmic; it reads MADEKRPA. Residues 9-29 form a helical membrane-spanning segment; it reads SRAWLGYLLIAVGILVLSGIV. At 30–108 the chain is on the periplasmic side; that stretch reads RSRGRPLVPY…RIEAKSPQTS (79 aa). Residues 109-129 form a helical membrane-spanning segment; the sequence is VWMQVAIWMLPLVLINAAFFM. Over 130-619 the chain is Cytoplasmic; that stretch reads MLRRAGQGAG…KIAVGPPSAA (490 aa). 203–210 contacts ATP; it reads GPPGTGKT. Histidine 426 contacts Zn(2+). Residue glutamate 427 is part of the active site. Zn(2+) contacts are provided by histidine 430 and aspartate 503.

This sequence in the central section; belongs to the AAA ATPase family. It in the C-terminal section; belongs to the peptidase M41 family. As to quaternary structure, homohexamer. The cofactor is Zn(2+).

The protein resides in the cell inner membrane. Functionally, acts as a processive, ATP-dependent zinc metallopeptidase for both cytoplasmic and membrane proteins. Plays a role in the quality control of integral membrane proteins. The chain is ATP-dependent zinc metalloprotease FtsH 1 from Sorangium cellulosum (strain So ce56) (Polyangium cellulosum (strain So ce56)).